The chain runs to 105 residues: Nitrogenase-stabilizing/protective protein NifW 2 (105 aa).

This sequence belongs to the NifW family.

May protect the nitrogenase Fe-Mo protein from oxidative damage. The chain is Nitrogenase-stabilizing/protective protein NifW 2 (nifW2) from Trichormus variabilis (strain ATCC 29413 / PCC 7937) (Anabaena variabilis).